The sequence spans 404 residues: MKPPFQQALGIIRQLNRHGYEAYFVGGAVRDLLLGRPIGDVDIATSALPDEVMAIFPKTIDVGSKHGTVVVVHEGTAYEVTTFRTDGDYEDHRRPESVTFVRSLEEDLKRRDFTMNAIAMDEHGTIIDPFGGQEAIEKRLIRTVGEADARFREDALRMMRAVRFVSQLGFSLAIDTKKAIIANAPLLAHISVERMTMEMEKLLAGPFAAEALPLLAETGLSTYLPGLAEKGEWLRRAAAYRWPWLAAREERWALLCHALGVKESRPFLRAWKLPNKVIDEAGAILATLAAVPEPAAWTNEQLFLAGLKRALSVEVVRAALTGKPYEPQHDELRRRFAALPIKTKGELAVNGKVVIDWIGKPAGPWVKETLDAIWRAVVNGEVENEKERIYAWLMERSRTQEKNC.

ATP contacts are provided by Gly27 and Arg30. Residues Gly27 and Arg30 each coordinate CTP. Positions 40 and 42 each coordinate Mg(2+). Residues Arg111, Asp154, Arg157, Arg160, and Arg163 each coordinate ATP. CTP-binding residues include Arg111, Asp154, Arg157, Arg160, and Arg163.

This sequence belongs to the tRNA nucleotidyltransferase/poly(A) polymerase family. Bacterial CCA-adding enzyme type 3 subfamily. Homodimer. Mg(2+) is required as a cofactor.

The enzyme catalyses a tRNA precursor + 2 CTP + ATP = a tRNA with a 3' CCA end + 3 diphosphate. It carries out the reaction a tRNA with a 3' CCA end + 2 CTP + ATP = a tRNA with a 3' CCACCA end + 3 diphosphate. In terms of biological role, catalyzes the addition and repair of the essential 3'-terminal CCA sequence in tRNAs without using a nucleic acid template. Adds these three nucleotides in the order of C, C, and A to the tRNA nucleotide-73, using CTP and ATP as substrates and producing inorganic pyrophosphate. tRNA 3'-terminal CCA addition is required both for tRNA processing and repair. Also involved in tRNA surveillance by mediating tandem CCA addition to generate a CCACCA at the 3' terminus of unstable tRNAs. While stable tRNAs receive only 3'-terminal CCA, unstable tRNAs are marked with CCACCA and rapidly degraded. The polypeptide is CCA-adding enzyme (Geobacillus thermodenitrificans (strain NG80-2)).